Consider the following 551-residue polypeptide: Cytochrome c oxidase subunit 1 (551 aa).

The chain crosses the membrane as a helical span at residues 34 to 54 (TLYLYSGVWGGLFGASLSLMI). Gly62 provides a ligand contact to Ca(2+). His79 contributes to the Fe(II)-heme a binding site. The next 6 helical transmembrane spans lie at 81 to 101 (LMMI…NWLI), 126 to 146 (ALYL…GWTI), 163 to 183 (VLIV…INFA), 209 to 229 (TAVL…MILF), 252 to 272 (LFWF…FGVM), and 285 to 305 (VFGL…GCMV). His258 contacts Cu cation. The segment at residues 258-262 (HPEVY) is a cross-link (1'-histidyl-3'-tyrosine (His-Tyr)). Tyr262 contacts O2. Residues His308 and His309 each coordinate Cu cation. The next 2 membrane-spanning stretches (helical) occupy residues 326–346 (ATMV…ATMA) and 356–376 (AYWS…GVLL). Mg(2+) contacts are provided by His386 and Asp387. The next 3 membrane-spanning stretches (helical) occupy residues 391-411 (VVAH…FCGL), 432-452 (FMAM…LGLS), and 475-495 (GSAV…EALV). A heme a3-binding site is contributed by His394. His396 contributes to the Fe(II)-heme a binding site.

This sequence belongs to the heme-copper respiratory oxidase family. Component of the cytochrome c oxidase (complex IV, CIV), a multisubunit enzyme composed of a catalytic core of 3 subunits and several supernumerary subunits. The complex exists as a monomer or a dimer and forms supercomplexes (SCs) in the inner mitochondrial membrane with ubiquinol-cytochrome c oxidoreductase (cytochrome b-c1 complex, complex III, CIII). Requires heme as cofactor. The cofactor is Cu cation.

The protein localises to the mitochondrion inner membrane. It catalyses the reaction 4 Fe(II)-[cytochrome c] + O2 + 8 H(+)(in) = 4 Fe(III)-[cytochrome c] + 2 H2O + 4 H(+)(out). Its pathway is energy metabolism; oxidative phosphorylation. Functionally, component of the cytochrome c oxidase, the last enzyme in the mitochondrial electron transport chain which drives oxidative phosphorylation. The respiratory chain contains 3 multisubunit complexes succinate dehydrogenase (complex II, CII), ubiquinol-cytochrome c oxidoreductase (cytochrome b-c1 complex, complex III, CIII) and cytochrome c oxidase (complex IV, CIV), that cooperate to transfer electrons derived from NADH and succinate to molecular oxygen, creating an electrochemical gradient over the inner membrane that drives transmembrane transport and the ATP synthase. Cytochrome c oxidase is the component of the respiratory chain that catalyzes the reduction of oxygen to water. Electrons originating from reduced cytochrome c in the intermembrane space (IMS) are transferred via the dinuclear copper A center (CU(A)) of subunit 2 and heme A of subunit 1 to the active site in subunit 1, a binuclear center (BNC) formed by heme A3 and copper B (CU(B)). The BNC reduces molecular oxygen to 2 water molecules using 4 electrons from cytochrome c in the IMS and 4 protons from the mitochondrial matrix. This Mytilus edulis (Blue mussel) protein is Cytochrome c oxidase subunit 1 (COI).